A 422-amino-acid chain; its full sequence is Interleukin-11 receptor subunit alpha (422 aa).

Residues 1 to 22 form the signal peptide; that stretch reads MSSSCSGLSRVLVAVATALVSA. Residues 24–370 lie on the Extracellular side of the membrane; sequence SPCPQAWGPP…DSVEQVAVLV (347 aa). An Ig-like C2-type domain is found at 27-110; that stretch reads PQAWGPPGVQ…LGGTVTLQLG (84 aa). 3 disulfide bridges follow: C48/C94, C120/C130, and C170/C180. Fibronectin type-III domains lie at 112-219 and 220-317; these read PPAR…LRPD and PPQG…TPST. N-linked (GlcNAc...) asparagine glycosylation occurs at N127. Residue N194 is glycosylated (N-linked (GlcNAc...) asparagine). Positions 304 to 308 match the WSXWS motif motif; that stretch reads WSTWS. A disordered region spans residues 335-355; the sequence is EVEPQVDSPAPPRPSLQPHPR. The helical transmembrane segment at 371–391 threads the bilayer; the sequence is SLGILSFLGLVAGALALGLWL. At 392–422 the chain is on the cytoplasmic side; that stretch reads RLRRGGKDGSPKPGFLASVIPVDRHPGAPNL.

This sequence belongs to the type I cytokine receptor family. Type 3 subfamily. In terms of assembly, on IL11 binding, forms a multimer complex with IL6ST/gp130. In terms of processing, a short soluble form is also released from the membrane by proteolysis. The sIL11RA is formed either by limited proteolysis of membrane-bound receptors, a process referred to as ectodomain shedding, or directly secreted from the cells after alternative mRNA splicing. mIL11RA is cleaved by the proteases ADAM10, ELANE and PRTN3.

It localises to the membrane. Its subcellular location is the secreted. Its function is as follows. Receptor for interleukin-11 (IL11). The receptor systems for IL6, LIF, OSM, CNTF, IL11 and CT1 can utilize IL6ST for initiating signal transmission. The IL11/IL11RA/IL6ST complex may be involved in the control of proliferation and/or differentiation of skeletogenic progenitor or other mesenchymal cells. Essential for the normal development of craniofacial bones and teeth. Restricts suture fusion and tooth number. Soluble form of IL11 receptor (sIL11RA) that acts as an agonist of IL11 activity. The IL11:sIL11RA complex binds to IL6ST/gp130 on cell surfaces and induces signaling also on cells that do not express membrane-bound IL11RA in a process called IL11 trans-signaling. This Pongo abelii (Sumatran orangutan) protein is Interleukin-11 receptor subunit alpha (IL11RA).